Here is a 337-residue protein sequence, read N- to C-terminus: Large ribosomal subunit protein uL3 (337 aa).

Belongs to the universal ribosomal protein uL3 family. As to quaternary structure, part of the 50S ribosomal subunit. Forms a cluster with proteins L14 and L24e.

Functionally, one of the primary rRNA binding proteins, it binds directly near the 3'-end of the 23S rRNA, where it nucleates assembly of the 50S subunit. The protein is Large ribosomal subunit protein uL3 of Methanospirillum hungatei JF-1 (strain ATCC 27890 / DSM 864 / NBRC 100397 / JF-1).